We begin with the raw amino-acid sequence, 112 residues long: Dolichyl-diphosphooligosaccharide--protein glycosyltransferase subunit DAD1 (112 aa).

Residues 1–27 (MVELSSVISKFYNDYVQNTPKKLKLVD) lie on the Cytoplasmic side of the membrane. Residues 28-48 (IYLGYILLTGIIQFVYCCLVG) form a helical membrane-spanning segment. The Lumenal portion of the chain corresponds to 49–51 (TFP). Residues 52–72 (FNSFLSGFISTVSCFVLAVCL) form a helical membrane-spanning segment. Residues 73–91 (RLQANPQNKSVFAGISPER) lie on the Cytoplasmic side of the membrane. Residues 92–112 (GFADFIFAHVILHLVVMNFIG) traverse the membrane as a helical segment.

The protein belongs to the DAD/OST2 family. As to quaternary structure, component of the oligosaccharyltransferase (OST) complex.

Its subcellular location is the endoplasmic reticulum membrane. Its pathway is protein modification; protein glycosylation. Functionally, subunit of the oligosaccharyl transferase (OST) complex that catalyzes the initial transfer of a defined glycan (Glc(3)Man(9)GlcNAc(2) in eukaryotes) from the lipid carrier dolichol-pyrophosphate to an asparagine residue within an Asn-X-Ser/Thr consensus motif in nascent polypeptide chains, the first step in protein N-glycosylation. N-glycosylation occurs cotranslationally and the complex associates with the Sec61 complex at the channel-forming translocon complex that mediates protein translocation across the endoplasmic reticulum (ER). All subunits are required for a maximal enzyme activity. Probably as part of the N-glycosylation pathway, plays a role in the regulation of tissue growth and apoptosis. The sequence is that of Dolichyl-diphosphooligosaccharide--protein glycosyltransferase subunit DAD1 from Drosophila melanogaster (Fruit fly).